The following is a 475-amino-acid chain: Aspartyl/glutamyl-tRNA(Asn/Gln) amidotransferase subunit B (475 aa).

It belongs to the GatB/GatE family. GatB subfamily. In terms of assembly, heterotrimer of A, B and C subunits.

It carries out the reaction L-glutamyl-tRNA(Gln) + L-glutamine + ATP + H2O = L-glutaminyl-tRNA(Gln) + L-glutamate + ADP + phosphate + H(+). The catalysed reaction is L-aspartyl-tRNA(Asn) + L-glutamine + ATP + H2O = L-asparaginyl-tRNA(Asn) + L-glutamate + ADP + phosphate + 2 H(+). Its function is as follows. Allows the formation of correctly charged Asn-tRNA(Asn) or Gln-tRNA(Gln) through the transamidation of misacylated Asp-tRNA(Asn) or Glu-tRNA(Gln) in organisms which lack either or both of asparaginyl-tRNA or glutaminyl-tRNA synthetases. The reaction takes place in the presence of glutamine and ATP through an activated phospho-Asp-tRNA(Asn) or phospho-Glu-tRNA(Gln). This chain is Aspartyl/glutamyl-tRNA(Asn/Gln) amidotransferase subunit B, found in Thermodesulfovibrio yellowstonii (strain ATCC 51303 / DSM 11347 / YP87).